We begin with the raw amino-acid sequence, 433 residues long: 3-phosphoshikimate 1-carboxyvinyltransferase (433 aa).

3 residues coordinate 3-phosphoshikimate: Lys23, Ser24, and Arg28. Position 23 (Lys23) interacts with phosphoenolpyruvate. Residues Gly93 and Arg121 each coordinate phosphoenolpyruvate. Positions 167, 169, 318, and 345 each coordinate 3-phosphoshikimate. Phosphoenolpyruvate is bound at residue Gln169. Asp318 functions as the Proton acceptor in the catalytic mechanism. The phosphoenolpyruvate site is built by Arg349 and Arg390.

This sequence belongs to the EPSP synthase family. Monomer.

The protein resides in the cytoplasm. It carries out the reaction 3-phosphoshikimate + phosphoenolpyruvate = 5-O-(1-carboxyvinyl)-3-phosphoshikimate + phosphate. Its pathway is metabolic intermediate biosynthesis; chorismate biosynthesis; chorismate from D-erythrose 4-phosphate and phosphoenolpyruvate: step 6/7. Its function is as follows. Catalyzes the transfer of the enolpyruvyl moiety of phosphoenolpyruvate (PEP) to the 5-hydroxyl of shikimate-3-phosphate (S3P) to produce enolpyruvyl shikimate-3-phosphate and inorganic phosphate. This Nitratiruptor sp. (strain SB155-2) protein is 3-phosphoshikimate 1-carboxyvinyltransferase.